Reading from the N-terminus, the 224-residue chain is MTLKNKSIVVLLSGGLDSSTVTGIAKKSEAKIFGLSFDYGQRHKKELNSASIIAKHFDIDEFKIIKLDLSLWGGSSLTDTQKNIPIEGVQTNKIPNTYVPGRNTIFISVALSYAEAIDADFIGLGVNALDYSGYPDCRPDYIKKFQELADLANKRGRENNPIKLWTPLLDLNKEEIIKLAFDNHVPLDKTWSCYSGNSKPCGKCDSCRIRNAAYEKWLNNNNKK.

An ATP-binding site is contributed by 12-22; the sequence is LSGGLDSSTVT. Positions 193, 201, 204, and 207 each coordinate Zn(2+).

This sequence belongs to the QueC family. The cofactor is Zn(2+).

It catalyses the reaction 7-carboxy-7-deazaguanine + NH4(+) + ATP = 7-cyano-7-deazaguanine + ADP + phosphate + H2O + H(+). It participates in purine metabolism; 7-cyano-7-deazaguanine biosynthesis. Functionally, catalyzes the ATP-dependent conversion of 7-carboxy-7-deazaguanine (CDG) to 7-cyano-7-deazaguanine (preQ(0)). The polypeptide is 7-cyano-7-deazaguanine synthase (Prochlorococcus marinus (strain AS9601)).